The chain runs to 469 residues: Acetyl-CoA decarbonylase/synthase complex subunit beta 2 (469 aa).

Cys-187, Cys-190, Cys-276, and Cys-278 together coordinate [Ni-Fe-S] cluster.

Belongs to the CdhC family. As to quaternary structure, monomer. The ACDS complex is made up of alpha, epsilon, beta, gamma and delta chains with a probable stoichiometry of (alpha(2)epsilon(2))(4)-beta(8)-(gamma(1)delta(1))(8) (Potential). [Ni-Fe-S] cluster is required as a cofactor.

The enzyme catalyses Co(I)-[corrinoid Fe-S protein] + acetyl-CoA + H(+) = methyl-Co(III)-[corrinoid Fe-S protein] + CO + CoA. In terms of biological role, part of a complex that catalyzes the reversible cleavage of acetyl-CoA, allowing autotrophic growth from CO(2). The alpha-epsilon complex generates CO from CO(2), while the beta subunit (this protein) combines the CO with CoA and a methyl group to form acetyl-CoA. The methyl group, which is incorporated into acetyl-CoA, is transferred to the beta subunit by a corrinoid iron-sulfur protein (the gamma-delta complex). This is Acetyl-CoA decarbonylase/synthase complex subunit beta 2 (cdhC2) from Methanocaldococcus jannaschii (strain ATCC 43067 / DSM 2661 / JAL-1 / JCM 10045 / NBRC 100440) (Methanococcus jannaschii).